Consider the following 77-residue polypeptide: Translation initiation factor IF-1, chloroplastic (77 aa).

The S1-like domain occupies 1–71 (MKEQKLIHEG…TRGRIIYRLR (71 aa)).

Belongs to the IF-1 family. As to quaternary structure, component of the 30S ribosomal translation pre-initiation complex which assembles on the 30S ribosome in the order IF-2 and IF-3, IF-1 and N-formylmethionyl-tRNA(fMet); mRNA recruitment can occur at any time during PIC assembly.

Its subcellular location is the plastid. The protein resides in the chloroplast. Functionally, one of the essential components for the initiation of protein synthesis. Stabilizes the binding of IF-2 and IF-3 on the 30S subunit to which N-formylmethionyl-tRNA(fMet) subsequently binds. Helps modulate mRNA selection, yielding the 30S pre-initiation complex (PIC). Upon addition of the 50S ribosomal subunit IF-1, IF-2 and IF-3 are released leaving the mature 70S translation initiation complex. In Ceratophyllum demersum (Rigid hornwort), this protein is Translation initiation factor IF-1, chloroplastic.